Here is a 422-residue protein sequence, read N- to C-terminus: UPF0761 membrane protein LHK_02978 (422 aa).

6 consecutive transmembrane segments (helical) span residues 44-64, 102-122, 141-161, 178-198, 212-232, and 246-266; these read LLSLVPLITITLIVVAAFPVF, LTAVGLALLAFTSLSLMLTID, MLVYWTVLTLGPLLLGVGISG, LAGIIQNLGSLTLATVMLTVL, ALIGGALTALTLGVAQAGFGL, and AFATFPFLLIWLQLMWLTVLI.

This sequence belongs to the UPF0761 family.

The protein resides in the cell inner membrane. This chain is UPF0761 membrane protein LHK_02978, found in Laribacter hongkongensis (strain HLHK9).